The sequence spans 341 residues: Mytilin-2 (341 aa).

The signal sequence occupies residues 1–24; sequence MFKQSYQLCLVFLLFVCFYQSVKG.

Component of the organic matrix of calcified shell layers like nacre and prisms.

The protein localises to the secreted. In Mytilus californianus (California mussel), this protein is Mytilin-2.